Here is a 131-residue protein sequence, read N- to C-terminus: MSEIPGDLKFLKSHEWARVEGNGRVTVGISDHAQGLLGDLVYVELPEVGADAKAGEQIAVVESVKAASDVYSPISGKVVEVNSALSDKPETINEDAYGEGWMFVVELTNAEEVNELLDPDAYAEALENDDH.

Residues 24-106 form the Lipoyl-binding domain; the sequence is RVTVGISDHA…YGEGWMFVVE (83 aa). N6-lipoyllysine is present on Lys65.

Belongs to the GcvH family. The glycine cleavage system is composed of four proteins: P, T, L and H. (R)-lipoate serves as cofactor.

Its function is as follows. The glycine cleavage system catalyzes the degradation of glycine. The H protein shuttles the methylamine group of glycine from the P protein to the T protein. The sequence is that of Glycine cleavage system H protein from Stenotrophomonas maltophilia (strain K279a).